The sequence spans 337 residues: Glutaredoxin-3 (337 aa).

At Ala2 the chain carries N-acetylalanine. The Thioredoxin domain maps to 2–119 (AAGAAEAGEA…LTKKVQRHVS (118 aa)). A Phosphoserine modification is found at Ser119. 2 Glutaredoxin domains span residues 144–238 (HAAP…PKLE) and 239–337 (ERLK…KGEN). Positions 161 and 263 each coordinate [2Fe-2S] cluster.

As to quaternary structure, homodimer; the homodimer is independent of 2Fe-2S clusters. Heterotrimer; forms a heterotrimeric complex composed by two BOLA2 molecules and one GLRX3 molecule; linked by [2Fe-2S] clusters. Interacts (via N-terminus) with PRKCQ/PKC-theta. Interacts (via C-terminus) with CSRP3. Interacts with CSRP2.

It localises to the cytoplasm. The protein resides in the cytosol. It is found in the cell cortex. The protein localises to the myofibril. Its subcellular location is the sarcomere. It localises to the z line. In terms of biological role, together with BOLA2, acts as a cytosolic iron-sulfur (Fe-S) cluster assembly factor that facilitates [2Fe-2S] cluster insertion into a subset of cytosolic proteins. Acts as a critical negative regulator of cardiac hypertrophy and a positive inotropic regulator. Required for hemoglobin maturation. Does not possess any thyoredoxin activity since it lacks the conserved motif that is essential for catalytic activity. The chain is Glutaredoxin-3 (Glrx3) from Mus musculus (Mouse).